A 487-amino-acid polypeptide reads, in one-letter code: Serine/threonine-protein kinase BSK7 (487 aa).

Residue glycine 2 is the site of N-myristoyl glycine attachment. The Protein kinase domain maps to 59-325; that stretch reads ENIVSEHGEK…DLETPSHQLM (267 aa). ATP-binding positions include 65–73 and lysine 87; that span reads HGEKAPNVV. Aspartate 181 (proton acceptor) is an active-site residue.

The protein belongs to the protein kinase superfamily. Ser/Thr protein kinase family.

The protein localises to the cell membrane. It catalyses the reaction L-seryl-[protein] + ATP = O-phospho-L-seryl-[protein] + ADP + H(+). It carries out the reaction L-threonyl-[protein] + ATP = O-phospho-L-threonyl-[protein] + ADP + H(+). In terms of biological role, probable serine/threonine kinase that acts as a positive regulator of brassinosteroid (BR) signaling downstream of the receptor kinase BRI1. Functions redundantly with BSK3, BSK5, BSK6 and BSK8. The chain is Serine/threonine-protein kinase BSK7 from Arabidopsis thaliana (Mouse-ear cress).